The sequence spans 364 residues: F-box/LRR-repeat protein At1g55660 (364 aa).

The F-box domain occupies 52–98 (MDKISQLPDELLVKVLSFLSTKDAVSTSILSMRWKSLWMWLPKLEYN). 6 LRR repeats span residues 158–179 (NVRE…LPKS), 185–206 (SIVI…VCLP), 207–228 (SLKT…HRLL), 233–254 (VLED…SVIV), 256–277 (SLQR…KMNS), and 279–300 (SLKY…ESDS).

This is F-box/LRR-repeat protein At1g55660 from Arabidopsis thaliana (Mouse-ear cress).